The sequence spans 215 residues: Uridine kinase (215 aa).

16–23 lines the ATP pocket; it reads GASASGKS.

The protein belongs to the uridine kinase family.

It localises to the cytoplasm. The catalysed reaction is uridine + ATP = UMP + ADP + H(+). It catalyses the reaction cytidine + ATP = CMP + ADP + H(+). It participates in pyrimidine metabolism; CTP biosynthesis via salvage pathway; CTP from cytidine: step 1/3. The protein operates within pyrimidine metabolism; UMP biosynthesis via salvage pathway; UMP from uridine: step 1/1. The sequence is that of Uridine kinase from Aliivibrio salmonicida (strain LFI1238) (Vibrio salmonicida (strain LFI1238)).